A 777-amino-acid polypeptide reads, in one-letter code: 1,4-alpha-glucan branching enzyme GlgB (777 aa).

Catalysis depends on D408, which acts as the Nucleophile. The active-site Proton donor is E461.

This sequence belongs to the glycosyl hydrolase 13 family. GlgB subfamily. In terms of assembly, monomer.

It catalyses the reaction Transfers a segment of a (1-&gt;4)-alpha-D-glucan chain to a primary hydroxy group in a similar glucan chain.. The protein operates within glycan biosynthesis; glycogen biosynthesis. In terms of biological role, catalyzes the formation of the alpha-1,6-glucosidic linkages in glycogen by scission of a 1,4-alpha-linked oligosaccharide from growing alpha-1,4-glucan chains and the subsequent attachment of the oligosaccharide to the alpha-1,6 position. This chain is 1,4-alpha-glucan branching enzyme GlgB, found in Actinobacillus pleuropneumoniae serotype 7 (strain AP76).